Reading from the N-terminus, the 426-residue chain is Trophoblast glycoprotein (426 aa).

The N-terminal stretch at 1–31 (MPGAGSRGPSAGDGRLRLARLALVLLGWVSA) is a signal peptide. Residues 32–361 (SAPSSSLPSS…ATLPQSLQTS (330 aa)) lie on the Extracellular side of the membrane. The span at 34-51 (PSSSLPSSSTSPAAFLAS) shows a compositional bias: low complexity. The tract at residues 34–54 (PSSSLPSSSTSPAAFLASGSA) is disordered. An LRRNT domain is found at 53–91 (SAQPPPAERCPAACECSEAARTVKCVNRNLLEVPADLPP). Intrachain disulfides connect C62-C68 and C66-C77. LRR repeat units lie at residues 92 to 113 (YVRN…AFAR), 116 to 139 (PLAD…GAFE), and 141 to 163 (LPGL…FTFA). An N-linked (GlcNAc...) asparagine glycan is attached at N124. N-linked (GlcNAc...) asparagine glycosylation is present at N166. 4 LRR repeats span residues 172–210 (PSPL…AALR), 215–238 (LRGL…LLDQ), 239–261 (LPSL…ASFR), and 262–281 (NLTH…VLHN). N281 carries N-linked (GlcNAc...) asparagine glycosylation. The region spanning 289–352 (GLAHVRVFLD…LTSSDLDCDA (64 aa)) is the LRRCT domain. 2 disulfide bridges follow: C304–C329 and C306–C350. A helical transmembrane segment spans residues 362-382 (YVFLGIVLALIGAIFLLVLYL). Over 383 to 426 (NRKGIKKWMHNIRDACRDHMEGYHYRYEINADPRLTNLSSNSDV) the chain is Cytoplasmic. S424 bears the Phosphoserine mark.

In terms of processing, highly glycosylated.

Its subcellular location is the cell membrane. Functionally, may function as an inhibitor of Wnt/beta-catenin signaling by indirectly interacting with LRP6 and blocking Wnt3a-dependent LRP6 internalization. The sequence is that of Trophoblast glycoprotein (Tpbg) from Rattus norvegicus (Rat).